The primary structure comprises 766 residues: 5-methyltetrahydropteroyltriglutamate--homocysteine methyltransferase (766 aa).

5-methyltetrahydropteroyltri-L-glutamate is bound by residues 16–19 (RELK) and K119. L-homocysteine is bound by residues 440–442 (IGS) and E493. L-methionine contacts are provided by residues 440–442 (IGS) and E493. Residues 524–525 (RC) and W570 each bind 5-methyltetrahydropteroyltri-L-glutamate. L-homocysteine is bound at residue D608. D608 lines the L-methionine pocket. Residue E614 participates in 5-methyltetrahydropteroyltri-L-glutamate binding. Zn(2+) is bound by residues H650, C652, and E674. The active-site Proton donor is the H703. Zn(2+) is bound at residue C735.

The protein belongs to the vitamin-B12 independent methionine synthase family. It depends on Zn(2+) as a cofactor.

It carries out the reaction 5-methyltetrahydropteroyltri-L-glutamate + L-homocysteine = tetrahydropteroyltri-L-glutamate + L-methionine. The protein operates within amino-acid biosynthesis; L-methionine biosynthesis via de novo pathway; L-methionine from L-homocysteine (MetE route): step 1/1. Functionally, catalyzes the transfer of a methyl group from 5-methyltetrahydrofolate to homocysteine resulting in methionine formation. The sequence is that of 5-methyltetrahydropteroyltriglutamate--homocysteine methyltransferase from Pseudomonas aeruginosa (strain ATCC 15692 / DSM 22644 / CIP 104116 / JCM 14847 / LMG 12228 / 1C / PRS 101 / PAO1).